The following is a 193-amino-acid chain: Acyl carrier protein phosphodiesterase (193 aa).

The protein belongs to the AcpH family.

The enzyme catalyses holo-[ACP] + H2O = apo-[ACP] + (R)-4'-phosphopantetheine + H(+). In terms of biological role, converts holo-ACP to apo-ACP by hydrolytic cleavage of the phosphopantetheine prosthetic group from ACP. In Escherichia coli O127:H6 (strain E2348/69 / EPEC), this protein is Acyl carrier protein phosphodiesterase.